We begin with the raw amino-acid sequence, 190 residues long: Protein PLANT CADMIUM RESISTANCE 10 (190 aa).

Transmembrane regions (helical) follow at residues 78–98 and 108–125; these read LLGS…WALV and GALL…ACGY.

The protein belongs to the cornifelin family.

The protein localises to the membrane. In terms of biological role, may be involved in cadmium resistance. This is Protein PLANT CADMIUM RESISTANCE 10 (PCR10) from Arabidopsis thaliana (Mouse-ear cress).